Reading from the N-terminus, the 168-residue chain is Cyanate hydratase (168 aa).

Catalysis depends on residues Arg94, Glu97, and Ser120.

The protein belongs to the cyanase family.

The catalysed reaction is cyanate + hydrogencarbonate + 3 H(+) = NH4(+) + 2 CO2. Functionally, catalyzes the reaction of cyanate with bicarbonate to produce ammonia and carbon dioxide. The chain is Cyanate hydratase from Oryza sativa subsp. indica (Rice).